A 189-amino-acid chain; its full sequence is GTP cyclohydrolase 1 (189 aa).

The Zn(2+) site is built by Cys-79, His-82, and Cys-150.

This sequence belongs to the GTP cyclohydrolase I family. As to quaternary structure, homomer.

The catalysed reaction is GTP + H2O = 7,8-dihydroneopterin 3'-triphosphate + formate + H(+). It functions in the pathway cofactor biosynthesis; 7,8-dihydroneopterin triphosphate biosynthesis; 7,8-dihydroneopterin triphosphate from GTP: step 1/1. This is GTP cyclohydrolase 1 from Rickettsia rickettsii (strain Iowa).